Consider the following 688-residue polypeptide: Subtilisin-like protease 1 (688 aa).

The N-terminal stretch at 1–25 (MMLNKKVVALCTLTLHLFCIFLCLG) is a signal peptide. Positions 26–217 (KEVRSEENGK…IESDKLVSAD (192 aa)) are cleaved as a propeptide — inhibition peptide. Residues 99–129 (EKNKNDNHNNNNNNISSSSSSSSNTFGEEKE) are disordered. Low complexity predominate over residues 106–122 (HNNNNNNISSSSSSSSN). N-linked (GlcNAc...) asparagine glycosylation is present at Asn112. 3 residues coordinate Ca(2+): Asn145, Thr148, and Pro150. N-linked (GlcNAc...) asparagine glycosylation occurs at Asn171. Residue Gly205 coordinates Ca(2+). N-linked (GlcNAc...) asparagine glycosylation occurs at Asn261. 2 disordered regions span residues 264 to 284 (HAAT…DTFS) and 303 to 332 (NNNN…RPGK). Low complexity predominate over residues 303–328 (NNNNYYYSHSSNGHNSSSRNSSSSRS). N-linked (GlcNAc...) asparagine glycans are attached at residues Asn317 and Asn322. Asp337 contacts Ca(2+). One can recognise a Peptidase S8 domain in the interval 343–661 (QWGLDLSRLD…AGYADINKAV (319 aa)). Disulfide bonds link Cys369/Cys479 and Cys458/Cys475. Asp372 acts as the Charge relay system in catalysis. The Ca(2+) site is built by Asp381, Glu392, Arg396, Phe399, Asp400, Asp401, Asp402, Asn404, Ile406, Asp408, and Asp409. N-linked (GlcNAc...) asparagine glycosylation occurs at Asn417. Residue His428 is the Charge relay system of the active site. Residues Ile439, Asn442, Ile444, and Val446 each contribute to the Ca(2+) site. Asn488, Asn501, and Asn520 each carry an N-linked (GlcNAc...) asparagine glycan. A disulfide bridge connects residues Cys521 and Cys534. The N-linked (GlcNAc...) asparagine glycan is linked to Asn603. Ser606 (charge relay system) is an active-site residue. Asn675 carries an N-linked (GlcNAc...) asparagine glycan.

This sequence belongs to the peptidase S8 family. As to quaternary structure, heterodimer between p54 form and prodomain p31; the interaction inhibits p54 catalytic activity. Heterodimer p31-p54 is monomeric at basic pH and dimeric at acidic pH; dimerization is driven by the N-terminal prodomain (p31). Ca(2+) serves as cofactor. In terms of processing, the prodomain (p31) is cleaved, probably by autocatalysis, during the transport to or in the Golgi apparatus, and remains non-covalently associated with the p54 form as an inhibitor. p54 is further cleaved into the p47 form. The p54-to-p47 conversion can be also autocatalytic. This cleavage is likely occurring in the exoneme prior to egress and is mediated by PMX/plasmepsin X. Heterodimer p31-p54 is activated by cleavage of prodomain (p31) by the aspartic protease PMX; cleavage by PMX abolishes inhibitory capacity of p31. Primary autocatalytic processing of SUB1 is essential for parasite growth; the p54-to-p47 conversion is dispensable for SUB1 functions in the parasites. Post-translationally, the disulfide bond between Cys-521 and Cys-534 acts as a redox-sensitive disulfide switch. The oxidized form is required for catalytic activity. The relevance of the N-glycosylation is not clear. In an insect expression system, SUB1 glycosylation appears to affect its processing into the active mature form suggesting that SUB1 may not be N-glycosylated in parasites.

The protein localises to the secreted. It localises to the parasitophorous vacuole lumen. It carries out the reaction Hydrolysis of proteins with broad specificity for peptide bonds, and a preference for a large uncharged residue in P1. Hydrolyzes peptide amides.. P54 and probably p47 forms are inhibited by the non-covalent interaction with the cleaved propeptide. Inhibited by subtilisin propeptide-like protein SUB1-ProM. Inhibited by small molecule MRT12113. In terms of biological role, serine protease which plays an essential role in merozoite invasion of and egress from host erythrocytes by processing and activating various merozoite surface and parasitophorous vacuole proteins. Mediates the proteolytic maturation of serine proteases SERA4, SERA5 and SERA6 just prior to merozoite egress. Prior to merozoite egress, cleaves merozoite surface proteins MSP1, MSP6 and MSP7, which form the MSP1/6/7 complex, and thereby may prime the parasite cell surface for invasion of fresh erythrocytes. Prior to merozoite egress, cleaves MSRP2 converting it to MSRP2 p25 form, and RAP1 converting it to RAP1 p67 form. This Plasmodium falciparum (isolate 3D7) protein is Subtilisin-like protease 1.